Reading from the N-terminus, the 571-residue chain is Putative fatty-acid--CoA ligase fadD11 (571 aa).

Residues 1 to 19 (MARLRGAGAAGRCRPGRFG) are compositionally biased toward low complexity. Disordered regions lie at residues 1-35 (MARLRGAGAAGRCRPGRFGSSARRHGLADDGEPDR) and 67-91 (RQRGDQGGHLRATVRRSRSRQRCAH). Over residues 78 to 91 (ATVRRSRSRQRCAH) the composition is skewed to basic residues. The next 2 membrane-spanning stretches (helical) occupy residues 314 to 334 (TLAFFAGIGIPIAEIWGMSEL) and 431 to 451 (ANIENTILAACPMVGVMMAIG).

The protein belongs to the ATP-dependent AMP-binding enzyme family.

It is found in the cell membrane. The sequence is that of Putative fatty-acid--CoA ligase fadD11 (fadD11) from Mycobacterium tuberculosis (strain CDC 1551 / Oshkosh).